The sequence spans 98 residues: Integration host factor subunit beta (98 aa).

Belongs to the bacterial histone-like protein family. In terms of assembly, heterodimer of an alpha and a beta chain.

Its function is as follows. This protein is one of the two subunits of integration host factor, a specific DNA-binding protein that functions in genetic recombination as well as in transcriptional and translational control. This is Integration host factor subunit beta from Teredinibacter turnerae (strain ATCC 39867 / T7901).